An 860-amino-acid polypeptide reads, in one-letter code: Protein argonaute-3 (860 aa).

The PAZ domain occupies 230 to 349 (PVIQFMCEVL…LPLEVCNIVA (120 aa)). The 302-residue stretch at 518–819 (LIIVILPGKT…VAFRARYHLV (302 aa)) folds into the Piwi domain. Positions 530-567 (YAEVKRVGDTLLGMATQCVQVKNVVKTSPQTLSNLCLK) are interaction with guide RNA. A divalent metal cation is bound by residues Asp598, Glu638, and Asp670. Residues 758–805 (QGTSRPSHYYVLWDDNCFTADEFQLLTYQLCHTYVRCTRSVSIPAPAY) form an interaction with guide RNA region. Residue His808 coordinates a divalent metal cation.

Belongs to the argonaute family. Ago subfamily.

Its subcellular location is the cytoplasm. It is found in the P-body. The catalysed reaction is Endonucleolytic cleavage to 5'-phosphomonoester.. Required for RNA-mediated gene silencing (RNAi). Binds to short RNAs such as microRNAs (miRNAs) and represses the translation of mRNAs which are complementary to them. Possesses RNA slicer activity but only on select RNAs bearing 5'- and 3'-flanking sequences to the region of guide-target complementarity. This chain is Protein argonaute-3 (ago3), found in Danio rerio (Zebrafish).